We begin with the raw amino-acid sequence, 301 residues long: Homoserine O-acetyltransferase (301 aa).

The active-site Acyl-thioester intermediate is C142. Substrate-binding residues include K163 and S192. H235 acts as the Proton acceptor in catalysis. The active site involves E237. A substrate-binding site is contributed by R249.

Belongs to the MetA family.

The protein localises to the cytoplasm. The catalysed reaction is L-homoserine + acetyl-CoA = O-acetyl-L-homoserine + CoA. Its pathway is amino-acid biosynthesis; L-methionine biosynthesis via de novo pathway; O-acetyl-L-homoserine from L-homoserine: step 1/1. Transfers an acetyl group from acetyl-CoA to L-homoserine, forming acetyl-L-homoserine. The protein is Homoserine O-acetyltransferase of Bacillus subtilis (strain 168).